We begin with the raw amino-acid sequence, 319 residues long: uncharacterized protein (319 aa).

Residues 270–290 (AAALWWIPAWLAMIVEVAVLG) form a helical membrane-spanning segment.

The protein localises to the membrane. This is an uncharacterized protein from Mycobacterium tuberculosis (strain CDC 1551 / Oshkosh).